The sequence spans 193 residues: Major intrinsically disordered NOTCH2-binding receptor 1-like homolog (193 aa).

Serine 82 carries the phosphoserine modification. A glycan (N-linked (GlcNAc...) asparagine) is linked at asparagine 128. A helical membrane pass occupies residues 172–192 (GLILLLVASILVTIVTLSTIF).

It belongs to the MINAR family. As to quaternary structure, interacts with NOTCH2. In terms of tissue distribution, widely expressed in the cortex and Purkinje cells of cerebellum. Expressed in the inner ear, mainly in the hair cells, spiral ganglia, the spiral limbus, and the stria vascularis.

It localises to the lysosome membrane. Its subcellular location is the endoplasmic reticulum membrane. Binds cholesterol and may regulate the distribution and homeostasis of cholesterol in hair cells. May play a role in angiogenesis. The protein is Major intrinsically disordered NOTCH2-binding receptor 1-like homolog of Mus musculus (Mouse).